Consider the following 538-residue polypeptide: Protein PNS1 (538 aa).

Residues 1-54 (MGESDAYYNGGQQQQYNGGYQQQYQPQPPAASYQAPPQQPYQQQPYQQGPPQNG) show a composition bias toward low complexity. Positions 1–67 (MGESDAYYNG…GNGYMPAQGY (67 aa)) are disordered. Residues 1 to 88 (MGESDAYYNG…FKIAKPKYND (88 aa)) lie on the Cytoplasmic side of the membrane. Residues 89–109 (LWAGILLILVFAGFVVVSGLA) form a helical membrane-spanning segment. At 110 to 137 (LQGYSANKGNAGDGIYNNKNDFSPNTST) the chain is on the extracellular side. Residue Asn134 is glycosylated (N-linked (GlcNAc...) asparagine). A helical membrane pass occupies residues 138–158 (VILFMFVLAVAFVLSYAYVWM). The Cytoplasmic segment spans residues 159–165 (ARLFPKQ). A helical transmembrane segment spans residues 166–186 (FIWVTGILNVCWAIGTAIFYL). The Extracellular segment spans residues 187 to 191 (WRKYW). A helical transmembrane segment spans residues 192 to 212 (SAGIVFLIFGLFMAFCFWTWI). Over 213-239 (SRIPFSALMLKTTIDVSKKYGHVYLVS) the chain is Cytoplasmic. A helical transmembrane segment spans residues 240–260 (LIGGIIATAFSAWYAITLVGI). Residues 261–280 (YVKYQPAQDNPSCADGGCGK) lie on the Extracellular side of the membrane. The chain crosses the membrane as a helical span at residues 281–301 (GKVIGLIAFITFAMYWFSEWL). Topologically, residues 302–335 (KNTIHTTIAGVYGSWYFNPHNFPKDATRASAKRA) are cytoplasmic. Residues 336 to 356 (LTYSFGSIALGSLLVAIIQFL) traverse the membrane as a helical segment. Over 357–372 (RQICNAARNQEGADGS) the chain is Extracellular. A helical transmembrane segment spans residues 373 to 393 (FVGYAIFCCISCLLGLLEWAV). Over 394–434 (EFINRYAFCHIALYGKAYFAAAKDTWKMIKDRGIDALINDC) the chain is Cytoplasmic. The chain crosses the membrane as a helical span at residues 435–455 (LIGPVLSFGALFIAYACALLA). Residues 456–474 (YLYLYFTDPAYNSDGQYTA) lie on the Extracellular side of the membrane. A helical transmembrane segment spans residues 475–495 (VVMAFSFLIGFQIANVFTTPI). Residues 496–538 (SSGIETIFVAAGWDPQVMWRDHPELYNEMVRVYPKVQQVIKDR) are Cytoplasmic-facing.

This sequence belongs to the CTL (choline transporter-like) family.

Its subcellular location is the cell membrane. Functionally, probably involved in transport through the plasma membrane. The chain is Protein PNS1 (PNS1) from Gibberella zeae (strain ATCC MYA-4620 / CBS 123657 / FGSC 9075 / NRRL 31084 / PH-1) (Wheat head blight fungus).